The following is a 265-amino-acid chain: Small ribosomal subunit protein uS3 (265 aa).

Residues 39–107 enclose the KH type-2 domain; that stretch reads VRDFLKKKLK…PVHVNIEEIR (69 aa). The interval 211 to 265 is disordered; sequence NDAPVVEEPQDDRRRRPGRPEGRRREGEGRPGGNRRGGAGAGRRAAPGADAKSGE. Residues 221-239 are compositionally biased toward basic and acidic residues; that stretch reads DDRRRRPGRPEGRRREGEG. Residues 240–251 show a composition bias toward gly residues; sequence RPGGNRRGGAGA.

Belongs to the universal ribosomal protein uS3 family. As to quaternary structure, part of the 30S ribosomal subunit. Forms a tight complex with proteins S10 and S14.

Its function is as follows. Binds the lower part of the 30S subunit head. Binds mRNA in the 70S ribosome, positioning it for translation. The chain is Small ribosomal subunit protein uS3 from Cupriavidus necator (strain ATCC 17699 / DSM 428 / KCTC 22496 / NCIMB 10442 / H16 / Stanier 337) (Ralstonia eutropha).